Here is a 415-residue protein sequence, read N- to C-terminus: YDG domain-containing protein At5g47160 (415 aa).

The interval 163 to 186 (KKLSNASRLRANAHRPTQHKDERR) is disordered. In terms of domain architecture, YDG spans 262–407 (GSVPGIKVGD…NILFKFKLRR (146 aa)).

It localises to the nucleus. The sequence is that of YDG domain-containing protein At5g47160 from Arabidopsis thaliana (Mouse-ear cress).